We begin with the raw amino-acid sequence, 557 residues long: Dihydroxy-acid dehydratase (557 aa).

Residue C50 coordinates [2Fe-2S] cluster. D82 contributes to the Mg(2+) binding site. Residue C123 coordinates [2Fe-2S] cluster. Positions 124 and 125 each coordinate Mg(2+). Position 125 is an N6-carboxylysine (K125). C195 contributes to the [2Fe-2S] cluster binding site. Residue E447 participates in Mg(2+) binding. S473 functions as the Proton acceptor in the catalytic mechanism.

This sequence belongs to the IlvD/Edd family. Homodimer. The cofactor is [2Fe-2S] cluster. It depends on Mg(2+) as a cofactor.

It catalyses the reaction (2R)-2,3-dihydroxy-3-methylbutanoate = 3-methyl-2-oxobutanoate + H2O. It carries out the reaction (2R,3R)-2,3-dihydroxy-3-methylpentanoate = (S)-3-methyl-2-oxopentanoate + H2O. Its pathway is amino-acid biosynthesis; L-isoleucine biosynthesis; L-isoleucine from 2-oxobutanoate: step 3/4. It participates in amino-acid biosynthesis; L-valine biosynthesis; L-valine from pyruvate: step 3/4. Functions in the biosynthesis of branched-chain amino acids. Catalyzes the dehydration of (2R,3R)-2,3-dihydroxy-3-methylpentanoate (2,3-dihydroxy-3-methylvalerate) into 2-oxo-3-methylpentanoate (2-oxo-3-methylvalerate) and of (2R)-2,3-dihydroxy-3-methylbutanoate (2,3-dihydroxyisovalerate) into 2-oxo-3-methylbutanoate (2-oxoisovalerate), the penultimate precursor to L-isoleucine and L-valine, respectively. This Herminiimonas arsenicoxydans protein is Dihydroxy-acid dehydratase.